The primary structure comprises 127 residues: Small ribosomal subunit protein uS11 (127 aa).

The protein belongs to the universal ribosomal protein uS11 family. In terms of assembly, part of the 30S ribosomal subunit.

Located on the platform of the 30S subunit. This is Small ribosomal subunit protein uS11 from Natronomonas pharaonis (strain ATCC 35678 / DSM 2160 / CIP 103997 / JCM 8858 / NBRC 14720 / NCIMB 2260 / Gabara) (Halobacterium pharaonis).